The sequence spans 133 residues: UPF0102 protein bll0669 (133 aa).

The protein belongs to the UPF0102 family.

In Bradyrhizobium diazoefficiens (strain JCM 10833 / BCRC 13528 / IAM 13628 / NBRC 14792 / USDA 110), this protein is UPF0102 protein bll0669.